Here is a 484-residue protein sequence, read N- to C-terminus: Acetaldehyde dehydrogenase (acetylating) (484 aa).

This sequence belongs to the aldehyde dehydrogenase family.

It carries out the reaction acetaldehyde + NAD(+) + CoA = acetyl-CoA + NADH + H(+). Its pathway is organosulfur degradation; alkanesulfonate degradation. In terms of biological role, involved in an anaerobic respiration pathway that converts the sulfonate taurine (2-aminoethanesulfonate) to ammonia, acetate and sulfide. Catalyzes the oxidation of acetaldehyde to acetyl-CoA in the presence of CoASH and NAD(+). Highly prefers NAD(+) over NADP(+). This is Acetaldehyde dehydrogenase (acetylating) from Bilophila wadsworthia (strain 3_1_6).